Consider the following 117-residue polypeptide: Large ribosomal subunit protein bL20 (117 aa).

This sequence belongs to the bacterial ribosomal protein bL20 family.

In terms of biological role, binds directly to 23S ribosomal RNA and is necessary for the in vitro assembly process of the 50S ribosomal subunit. It is not involved in the protein synthesizing functions of that subunit. The protein is Large ribosomal subunit protein bL20 of Nitratidesulfovibrio vulgaris (strain DP4) (Desulfovibrio vulgaris).